The sequence spans 455 residues: Probable glycine dehydrogenase (decarboxylating) subunit 1 (455 aa).

Belongs to the GcvP family. N-terminal subunit subfamily. In terms of assembly, the glycine cleavage system is composed of four proteins: P, T, L and H. In this organism, the P 'protein' is a heterodimer of two subunits.

It catalyses the reaction N(6)-[(R)-lipoyl]-L-lysyl-[glycine-cleavage complex H protein] + glycine + H(+) = N(6)-[(R)-S(8)-aminomethyldihydrolipoyl]-L-lysyl-[glycine-cleavage complex H protein] + CO2. The glycine cleavage system catalyzes the degradation of glycine. The P protein binds the alpha-amino group of glycine through its pyridoxal phosphate cofactor; CO(2) is released and the remaining methylamine moiety is then transferred to the lipoamide cofactor of the H protein. The chain is Probable glycine dehydrogenase (decarboxylating) subunit 1 from Francisella tularensis subsp. novicida (strain U112).